The sequence spans 545 residues: Chaperonin GroEL (545 aa).

Residues 30-33 (TLGP), lysine 51, 87-91 (DGTTT), glycine 415, and aspartate 495 each bind ATP.

It belongs to the chaperonin (HSP60) family. In terms of assembly, forms a cylinder of 14 subunits composed of two heptameric rings stacked back-to-back. Interacts with the co-chaperonin GroES.

Its subcellular location is the cytoplasm. It catalyses the reaction ATP + H2O + a folded polypeptide = ADP + phosphate + an unfolded polypeptide.. In terms of biological role, together with its co-chaperonin GroES, plays an essential role in assisting protein folding. The GroEL-GroES system forms a nano-cage that allows encapsulation of the non-native substrate proteins and provides a physical environment optimized to promote and accelerate protein folding. The chain is Chaperonin GroEL from Shewanella sp. (strain W3-18-1).